Here is a 1726-residue protein sequence, read N- to C-terminus: Protein NLRC5 (1726 aa).

The 331-residue stretch at 207 to 537 folds into the NACHT domain; that stretch reads RVVMLSGQAG…THLTIQEFMA (331 aa). 213–220 is a binding site for ATP; the sequence is GQAGSGKT. LRR repeat units follow at residues 879-902, 904-925, 1002-1025, 1026-1048, 1103-1126, 1128-1155, 1212-1235, 1351-1374, 1387-1411, 1421-1443, 1447-1468, 1502-1525, 1532-1553, 1560-1580, 1588-1609, 1616-1637, 1642-1662, and 1670-1691; these read LTVLNLSHNALGNRGLKKLLEHLP, LDTIQEINVSDNGVDMDGVVLL, NLDFSHGTLKDESTEKLLKFLPNM, ASLNLLNLSHIQMSTDSALLLVQ, CHHLTDLDLSSNFLKDEDVKTFVQ, LPKLQISGSVSLNNNNLTEVGVLYLLSL, LNSVQTLELRNNSFSADTIKYLIT, AEFLSSVLPSLKNLKILSLSSKGE, AQKHLEQLSLAHHVIKDRGAAVLGN, SLSLLKCLDWTATGGRDLVRGLV, SLEEIRLDSIELDEESIDCFAQ, LIELEEIELIGLRMGDRGVEELVK, RLRKINLSENRVSDHAGEMLVK, ALQQIHLFRNNLGHSSAAVLG, ELTELDLSENQMESKGCSSVCE, ALKKLHLTSIGTSDLVNVASCL, SIEDISLSWNNCENDVVLKLA, and KLKRLDLEANNINTSGAMALAT.

This sequence belongs to the NLRP family.

The protein localises to the cytoplasm. In terms of biological role, probable regulator of the NF-kappa-B and type I interferon signaling pathways. May also regulate the type II interferon signaling pathway. Plays a role in homeostatic control of innate immunity and in antiviral defense mechanisms. The chain is Protein NLRC5 (nlrc5) from Ictalurus punctatus (Channel catfish).